A 647-amino-acid polypeptide reads, in one-letter code: tRNA 5-methylaminomethyl-2-thiouridine biosynthesis bifunctional protein MnmC (647 aa).

Residues 1 to 235 (MSIPPFSQAS…KRDMLCGRFT (235 aa)) form a tRNA (mnm(5)s(2)U34)-methyltransferase region. The FAD-dependent cmnm(5)s(2)U34 oxidoreductase stretch occupies residues 250-647 (IGGGIAGTAS…RGLACHPLRR (398 aa)).

This sequence in the N-terminal section; belongs to the methyltransferase superfamily. tRNA (mnm(5)s(2)U34)-methyltransferase family. It in the C-terminal section; belongs to the DAO family. It depends on FAD as a cofactor.

Its subcellular location is the cytoplasm. It catalyses the reaction 5-aminomethyl-2-thiouridine(34) in tRNA + S-adenosyl-L-methionine = 5-methylaminomethyl-2-thiouridine(34) in tRNA + S-adenosyl-L-homocysteine + H(+). Its function is as follows. Catalyzes the last two steps in the biosynthesis of 5-methylaminomethyl-2-thiouridine (mnm(5)s(2)U) at the wobble position (U34) in tRNA. Catalyzes the FAD-dependent demodification of cmnm(5)s(2)U34 to nm(5)s(2)U34, followed by the transfer of a methyl group from S-adenosyl-L-methionine to nm(5)s(2)U34, to form mnm(5)s(2)U34. The polypeptide is tRNA 5-methylaminomethyl-2-thiouridine biosynthesis bifunctional protein MnmC (Methylobacillus flagellatus (strain ATCC 51484 / DSM 6875 / VKM B-1610 / KT)).